The sequence spans 443 residues: Phosphoglucosamine mutase (443 aa).

The active-site Phosphoserine intermediate is S100. Mg(2+)-binding residues include S100, D239, D241, and D243. A Phosphoserine modification is found at S100.

The protein belongs to the phosphohexose mutase family. Mg(2+) is required as a cofactor. Post-translationally, activated by phosphorylation.

It catalyses the reaction alpha-D-glucosamine 1-phosphate = D-glucosamine 6-phosphate. Functionally, catalyzes the conversion of glucosamine-6-phosphate to glucosamine-1-phosphate. The sequence is that of Phosphoglucosamine mutase from Shewanella sediminis (strain HAW-EB3).